A 134-amino-acid chain; its full sequence is B3 domain-containing protein At1g16640 (134 aa).

A DNA-binding region (TF-B3) is located at residues V7 to N100.

The protein resides in the nucleus. This Arabidopsis thaliana (Mouse-ear cress) protein is B3 domain-containing protein At1g16640.